The following is a 245-amino-acid chain: 1-(5-phosphoribosyl)-5-[(5-phosphoribosylamino)methylideneamino] imidazole-4-carboxamide isomerase (245 aa).

Catalysis depends on aspartate 7, which acts as the Proton acceptor. Catalysis depends on aspartate 129, which acts as the Proton donor.

This sequence belongs to the HisA/HisF family.

The protein localises to the cytoplasm. It catalyses the reaction 1-(5-phospho-beta-D-ribosyl)-5-[(5-phospho-beta-D-ribosylamino)methylideneamino]imidazole-4-carboxamide = 5-[(5-phospho-1-deoxy-D-ribulos-1-ylimino)methylamino]-1-(5-phospho-beta-D-ribosyl)imidazole-4-carboxamide. Its pathway is amino-acid biosynthesis; L-histidine biosynthesis; L-histidine from 5-phospho-alpha-D-ribose 1-diphosphate: step 4/9. The protein is 1-(5-phosphoribosyl)-5-[(5-phosphoribosylamino)methylideneamino] imidazole-4-carboxamide isomerase of Escherichia coli (strain 55989 / EAEC).